A 202-amino-acid chain; its full sequence is MATELRRKLVIVGDGACGKTCLLIVFSKGTFPEVYVPTVFENYVADVEVDGRHVELALWDTAGQEDYDRLRPLSYPDSHVILICFAVDSPDSLDNVQEKWISEVLHFCSSLPILLVACKADLRNDPKIIEELSKTNQHPVTTEEGQAVAQKIGAYKYLECSAKTNEGVREVFESATRAAMLKHKPKVKPSSGTKKKKRCILL.

Residue 13 to 20 (GDGACGKT) participates in GTP binding. The Effector region motif lies at 35 to 43 (YVPTVFENY). GTP-binding positions include 60 to 64 (DTAGQ) and 118 to 121 (CKAD). Cys199 is modified (cysteine methyl ester). Cys199 carries the S-geranylgeranyl cysteine lipid modification. A propeptide spans 200–202 (ILL) (removed in mature form).

Belongs to the small GTPase superfamily. Rho family.

Its subcellular location is the cell membrane. Involved in the regulation of cell wall growth and actin cytoskeleton organization. Activates (1,3)-beta-D-glucan synthase. The protein is GTP-binding protein rho1 (rho1) of Schizosaccharomyces pombe (strain 972 / ATCC 24843) (Fission yeast).